Here is a 372-residue protein sequence, read N- to C-terminus: Peroxisomal biogenesis factor 3 (372 aa).

At 1 to 15 (MLRSMWNFLKRHKKK) the chain is on the cytoplasmic side. Residues 1-45 (MLRSMWNFLKRHKKKCIFLGTVLGGVYILGKYGQKKIREIQEREA) form a targeting to peroxisomes region. The chain crosses the membrane as a helical span at residues 16–36 (CIFLGTVLGGVYILGKYGQKK). The Peroxisomal segment spans residues 37–116 (IREIQEREAA…LKIISFTRSI (80 aa)). Residues 117–140 (VAVYSTCMLVVLLRVQLNIIGGYI) form a helical membrane-spanning segment. The interaction with PEX19 stretch occupies residues 120 to 136 (YSTCMLVVLLRVQLNII). The Cytoplasmic segment spans residues 141–372 (YLDNATVGKN…AFSTPQQLEK (232 aa)).

It belongs to the peroxin-3 family. Interacts with PEX19. As to expression, identified in all tissues analyzed, with the strongest expression in liver and in testis.

The protein localises to the peroxisome membrane. Functionally, involved in peroxisome biosynthesis and integrity. Assembles membrane vesicles before the matrix proteins are translocated. As a docking factor for PEX19, is necessary for the import of peroxisomal membrane proteins in the peroxisomes. This is Peroxisomal biogenesis factor 3 (Pex3) from Mus musculus (Mouse).